A 255-amino-acid polypeptide reads, in one-letter code: Large ribosomal subunit protein eL8 (255 aa).

A compositionally biased stretch (basic residues) spans 1–16 (MPKAPKKITKPKKAEK). The segment at 1 to 28 (MPKAPKKITKPKKAEKKKNPLFQAKPRS) is disordered.

This sequence belongs to the eukaryotic ribosomal protein eL8 family.

In Tetrahymena thermophila, this protein is Large ribosomal subunit protein eL8 (RPL7A).